Reading from the N-terminus, the 208-residue chain is Putative thymidylate kinase (208 aa).

The tract at residues 12–19 is defective ATP-binding; the sequence is GIDGTGTS.

Belongs to the thymidylate kinase family.

It carries out the reaction dTMP + ATP = dTDP + ADP. This Treponema pallidum (strain Nichols) protein is Putative thymidylate kinase (tmk).